The chain runs to 301 residues: GTPase Era (301 aa).

In terms of domain architecture, Era-type G spans 4 to 173 (KAGFVALIGK…LECISKHLNP (170 aa)). Residues 12–19 (GKPNAGKS) form a G1 region. Residue 12 to 19 (GKPNAGKS) coordinates GTP. The G2 stretch occupies residues 38-42 (NATRK). Residues 64–67 (DTPG) form a G3 region. GTP-binding positions include 64–68 (DTPGL) and 122–125 (SKID). The interval 122-125 (SKID) is G4. The G5 stretch occupies residues 152–154 (LSA). The 77-residue stretch at 204 to 280 (LSDEIPYESD…FLNLQVIAQK (77 aa)) folds into the KH type-2 domain.

Belongs to the TRAFAC class TrmE-Era-EngA-EngB-Septin-like GTPase superfamily. Era GTPase family. Monomer.

It localises to the cytoplasm. The protein resides in the cell inner membrane. An essential GTPase that binds both GDP and GTP, with rapid nucleotide exchange. Plays a role in 16S rRNA processing and 30S ribosomal subunit biogenesis and possibly also in cell cycle regulation and energy metabolism. The protein is GTPase Era of Helicobacter pylori (strain P12).